The primary structure comprises 31 residues: HSQGMFTNDYSKYLEEKLAQEFVEWLKNGKS.

This sequence belongs to the glucagon family.

It is found in the secreted. Glucagon plays a key role in glucose metabolism and homeostasis. Regulates blood glucose by increasing gluconeogenesis and decreasing glycolysis. The polypeptide is Glucagon-5 (Huso dauricus (Kaluga sturgeon)).